Reading from the N-terminus, the 234-residue chain is tRNA (guanine-N(1)-)-methyltransferase (234 aa).

S-adenosyl-L-methionine is bound by residues glycine 110 and 134 to 139 (IGDYVL).

Belongs to the RNA methyltransferase TrmD family. In terms of assembly, homodimer.

Its subcellular location is the cytoplasm. The catalysed reaction is guanosine(37) in tRNA + S-adenosyl-L-methionine = N(1)-methylguanosine(37) in tRNA + S-adenosyl-L-homocysteine + H(+). Functionally, specifically methylates guanosine-37 in various tRNAs. The protein is tRNA (guanine-N(1)-)-methyltransferase of Tropheryma whipplei (strain Twist) (Whipple's bacillus).